Here is a 1095-residue protein sequence, read N- to C-terminus: MSRSAIQVAKAATYLPDLVEVQRSSFKWFLDKGLIEELDNFSPITDYTGKLELHFIGAEYKLKRPRHDVEEAKRRDATFASQMYVTCRLVNKETGEIKEQEVFIGELPLMTERGTFIINGAERVIVNQIVRSPGVYFKDEQDKNGRRTYNASVIPNRGAWLKFETDKNDLLHVRVDKTRKINAHVLMRAMGLSDNDVIDKLRHPEFYKKSIDAANEEGISSEDQALLELYKKLRPGEPPSVSGGQQLLQTRFFDPKRYDLGRVGRYKINKKLRLTIPDNLRTLTNEDVLSTLDYLINLELDVGGATLDDIDHLGNRRVRSVGELLQNQVRVGLNRLERIIKERMTVGETDSLTPAQLVNPKPLVAAIKEFFGSSQLSQFMDQTNPLAELTHKRRISALGPGGLTRERAGFAVRDIHPSHYGRLCPIETPEGPNAGLINSLATHARVNEYGFIETPFWKVENGRLIKEGDPIYLSADLEDECRVAPGDVATNEEGKIMAELVPVRYRQDFETVSPEQVDYVQLSPVQVISVAASLIPFLEHDDANRALMGSNMQRQAVPLLRPERPLVGTGLETQVARDSGMVPISKVNGTVSYVDANAIVVTDDEGNDHTHYLQKYQRSNQDTCLNHRPIVFNGDPVIVGQVLADGSACEGGEIALGQNVLIAYMPWEGYNYEDAILVSERLVKDDLYTSVHIEKYEIEARQTKLGPEEITREIPNVSEENLGNLDEMGIIRIGAYVESGDILVGKVTPKGESDQPPEEKLLRAIFGEKARDVRDNSLRVPSTERGRVVDVRIYTREQGDELPPGANMVVRVYVAQRRKIQVGDKMAGRHGNKGIISRILPREDMPYLPDGTPVDICLNPLGVPSRMNVGQVFELLMGWAASNLDCRVKIVPFDEMYGPEMSNQTVQAYLKEAAKQPGKSWVYNPKDPGKLLLKDGRTGEPFDQPVAVGYAHFLKLVHLVDDKIHARSTGPYSLVTQQPLGGKAQQGGQRLGEMEVWALEAYGAAYTLQELLTVKSDDMQGRNEALNSIVKGKPIPRPGTPESFKVLMRELQSLGLDIGVYTDDGKEVDLMQDVNPRRSTPSRPTYESLGKEYEE.

Residues 1069–1095 (DLMQDVNPRRSTPSRPTYESLGKEYEE) are disordered.

This sequence belongs to the RNA polymerase beta chain family. As to quaternary structure, in cyanobacteria the RNAP catalytic core is composed of 2 alpha, 1 beta, 1 beta', 1 gamma and 1 omega subunit. When a sigma factor is associated with the core the holoenzyme is formed, which can initiate transcription.

It carries out the reaction RNA(n) + a ribonucleoside 5'-triphosphate = RNA(n+1) + diphosphate. Functionally, DNA-dependent RNA polymerase catalyzes the transcription of DNA into RNA using the four ribonucleoside triphosphates as substrates. The chain is DNA-directed RNA polymerase subunit beta from Prochlorococcus marinus (strain NATL1A).